Here is a 290-residue protein sequence, read N- to C-terminus: 4-hydroxy-tetrahydrodipicolinate synthase (290 aa).

Thr48 is a pyruvate binding site. The active-site Proton donor/acceptor is the Tyr137. Lys165 serves as the catalytic Schiff-base intermediate with substrate. Residue Ile206 participates in pyruvate binding.

The protein belongs to the DapA family. In terms of assembly, homotetramer; dimer of dimers.

Its subcellular location is the cytoplasm. It carries out the reaction L-aspartate 4-semialdehyde + pyruvate = (2S,4S)-4-hydroxy-2,3,4,5-tetrahydrodipicolinate + H2O + H(+). The protein operates within amino-acid biosynthesis; L-lysine biosynthesis via DAP pathway; (S)-tetrahydrodipicolinate from L-aspartate: step 3/4. In terms of biological role, catalyzes the condensation of (S)-aspartate-beta-semialdehyde [(S)-ASA] and pyruvate to 4-hydroxy-tetrahydrodipicolinate (HTPA). The sequence is that of 4-hydroxy-tetrahydrodipicolinate synthase from Enterococcus faecalis (strain ATCC 700802 / V583).